We begin with the raw amino-acid sequence, 208 residues long: Cytochrome c oxidase assembly protein CtaG (208 aa).

At 1–19 the chain is on the cytoplasmic side; the sequence is MKQRPTGPDTTPRNRRGFG. The helical; Signal-anchor for type II membrane protein transmembrane segment at 20–42 threads the bilayer; that stretch reads RDTAVASVCGLVVALMVGASYAA. Residues 43–208 are Periplasmic-facing; that stretch reads VPFYNWFCRV…SEAGPRQGAL (166 aa).

The protein belongs to the COX11/CtaG family.

Its subcellular location is the cell inner membrane. Exerts its effect at some terminal stage of cytochrome c oxidase synthesis, probably by being involved in the insertion of the copper B into subunit I. This chain is Cytochrome c oxidase assembly protein CtaG, found in Rhodopseudomonas palustris (strain BisA53).